A 136-amino-acid chain; its full sequence is Protein PsiE (136 aa).

A run of 4 helical transmembrane segments spans residues Ile15–Leu35, Tyr55–Val75, Phe82–Ile102, and Pro108–Cys128.

This sequence belongs to the PsiE family.

Its subcellular location is the cell inner membrane. This chain is Protein PsiE, found in Escherichia coli (strain UTI89 / UPEC).